Reading from the N-terminus, the 380-residue chain is Cytochrome b (380 aa).

4 helical membrane passes run 34-54 (FGSL…LLAM), 78-99 (WLIR…YLHI), 114-134 (WNTG…GYVL), and 179-199 (FFAL…IHLT). Heme b is bound by residues His-84 and His-98. Heme b-binding residues include His-183 and His-197. His-202 provides a ligand contact to a ubiquinone. Transmembrane regions (helical) follow at residues 227-247 (LKDF…ALFT), 289-309 (LGGV…PFLH), 321-341 (LSQT…WIGS), and 348-368 (FITI…ILFP).

It belongs to the cytochrome b family. In terms of assembly, the cytochrome bc1 complex contains 11 subunits: 3 respiratory subunits (MT-CYB, CYC1 and UQCRFS1), 2 core proteins (UQCRC1 and UQCRC2) and 6 low-molecular weight proteins (UQCRH/QCR6, UQCRB/QCR7, UQCRQ/QCR8, UQCR10/QCR9, UQCR11/QCR10 and a cleavage product of UQCRFS1). This cytochrome bc1 complex then forms a dimer. The cofactor is heme b.

It localises to the mitochondrion inner membrane. Component of the ubiquinol-cytochrome c reductase complex (complex III or cytochrome b-c1 complex) that is part of the mitochondrial respiratory chain. The b-c1 complex mediates electron transfer from ubiquinol to cytochrome c. Contributes to the generation of a proton gradient across the mitochondrial membrane that is then used for ATP synthesis. This chain is Cytochrome b (MT-CYB), found in Coracias caudatus (Lilac-breasted roller).